The following is a 289-amino-acid chain: Rhodopsin (289 aa).

At 1–7 (YLVSPAA) the chain is on the extracellular side. Residues 8–32 (YAALGAYMFLLILVGFPVNFLTLYV) form a helical membrane-spanning segment. The Cytoplasmic portion of the chain corresponds to 33–44 (TLDHKKLRTPLN). Residues 45–67 (YILLNLAVADLFMVLGGFTTTMY) traverse the membrane as a helical segment. The Extracellular segment spans residues 68 to 81 (TSMHGYFVLGRLGC). Cysteines 81 and 158 form a disulfide. A helical transmembrane segment spans residues 82 to 104 (NLEGFFATLGGEIALWSLVVLAI). Positions 105 to 107 (ERW) match the 'Ionic lock' involved in activated form stabilization motif. Over 105–123 (ERWIVVCKPISNFRFTEDH) the chain is Cytoplasmic. The helical transmembrane segment at 124–144 (AIMGLAFSWVMALTCAVPPLV) threads the bilayer. The Extracellular portion of the chain corresponds to 145–173 (GWSRYIPEGMQCSCGVDYYTRAEGFNTES). A helical membrane pass occupies residues 174-195 (FVLYMFTVHFLIPLSVIFFCYG). Topologically, residues 196-223 (RLLCAVKEAAAAQQESETTQRAEKEVSR) are cytoplasmic. The helical transmembrane segment at 224 to 245 (MVVLMVIGFLVCWLPYASVAWW) threads the bilayer. Over 246-257 (IFCNQGSEFGPI) the chain is Extracellular. The chain crosses the membrane as a helical span at residues 258–279 (FMTLPAFFAKTSAIYNPLIYIC). Lysine 267 is subject to N6-(retinylidene)lysine. At 280–289 (MNKQFRHCMI) the chain is on the cytoplasmic side.

Belongs to the G-protein coupled receptor 1 family. Opsin subfamily. Phosphorylated on some or all of the serine and threonine residues present in the C-terminal region. Post-translationally, contains one covalently linked retinal chromophore.

It is found in the membrane. It localises to the cell projection. Its subcellular location is the cilium. The protein resides in the photoreceptor outer segment. Functionally, photoreceptor required for image-forming vision at low light intensity. While most salt water fish species use retinal as chromophore, most freshwater fish use 3-dehydroretinal, or a mixture of retinal and 3-dehydroretinal. Light-induced isomerization of 11-cis to all-trans retinal triggers a conformational change that activates signaling via G-proteins. Subsequent receptor phosphorylation mediates displacement of the bound G-protein alpha subunit by arrestin and terminates signaling. This chain is Rhodopsin (rho), found in Procottus jeittelesii (Red sculpin).